The sequence spans 260 residues: Global transcriptional regulator CodY (260 aa).

Positions 1-159 (MPNLLQKTRK…SSTVVGIQLL (159 aa)) are GAF domain. Positions 207–226 (ASVIADRIGITRSVIVNALR) form a DNA-binding region, H-T-H motif.

Belongs to the CodY family.

It localises to the cytoplasm. In terms of biological role, DNA-binding global transcriptional regulator which is involved in the adaptive response to starvation and acts by directly or indirectly controlling the expression of numerous genes in response to nutrient availability. During rapid exponential growth, CodY is highly active and represses genes whose products allow adaptation to nutrient depletion. The protein is Global transcriptional regulator CodY of Streptococcus equi subsp. zooepidemicus (strain MGCS10565).